Here is a 661-residue protein sequence, read N- to C-terminus: Bifunctional xylanase/xylan deacetylase (661 aa).

A signal peptide spans 1–27 (MKLPTLGKCVVRTLMGAVALGAISVNA). The GH11 domain maps to 29-226 (TLSSNSTGTN…SRGSSDITVS (198 aa)). Catalysis depends on glutamate 116, which acts as the Nucleophile; for endoxylanase activity. Glutamate 213 acts as the Proton donor; for endoxylanase activity in catalysis. The interval 220–259 (SSDITVSEGTSGGGTSSVGGASSSVNSSTGGGSSGGITVR) is disordered. Low complexity predominate over residues 237–247 (VGGASSSVNSS). The segment at 394-577 (SNCSGYVGIT…AKGLCPGRID (184 aa)) is polysaccharide deacetylase. The NodB homology domain occupies 398 to 574 (GYVGITFDDG…NLRAKGLCPG (177 aa)). A disordered region spans residues 578 to 610 (PNTGRAVAPSSSGGSSSVALSSSSRSSSSAGGN). Over residues 581–608 (GRAVAPSSSGGSSSVALSSSSRSSSSAG) the composition is skewed to low complexity. The CBM10 domain maps to 616–645 (QCNWWGTFYPLCQTQTSGWGWENSRSCIST).

It in the N-terminal section; belongs to the glycosyl hydrolase 11 (cellulase G) family.

Its subcellular location is the secreted. It catalyses the reaction Endohydrolysis of (1-&gt;4)-beta-D-xylosidic linkages in xylans.. The enzyme catalyses Deacetylation of xylans and xylo-oligosaccharides.. It participates in glycan degradation; xylan degradation. Its function is as follows. Endo-acting xylanase which specifically cleaves internal linkages on the xylan backbone, releasing xylooligosaccharides. Is able to hydrolyze oat spelt xylan and the arabinoxylans from wheat and rye, releasing xylobiose as the major product. Also likely catalyzes, via its C-terminal domain, the removal of acetyl groups from acetylated xylan. Thus, has the capability of hydrolyzing acetylated xylan. Does not attack mannan, galactan, arabinan or any cellulosic substrates. This Cellvibrio japonicus (Pseudomonas fluorescens subsp. cellulosa) protein is Bifunctional xylanase/xylan deacetylase (xyn11A).